The chain runs to 249 residues: ATP synthase subunit a, chloroplastic (249 aa).

Helical transmembrane passes span 40–60 (QVLI…VIAI), 97–117 (VPFI…GALL), 136–156 (INTT…AGLS), 201–221 (LVVV…VMFL), and 222–242 (GLFT…AYIG).

Belongs to the ATPase A chain family. As to quaternary structure, F-type ATPases have 2 components, CF(1) - the catalytic core - and CF(0) - the membrane proton channel. CF(1) has five subunits: alpha(3), beta(3), gamma(1), delta(1), epsilon(1). CF(0) has four main subunits: a, b, b' and c.

The protein localises to the plastid. It is found in the chloroplast thylakoid membrane. Key component of the proton channel; it plays a direct role in the translocation of protons across the membrane. The sequence is that of ATP synthase subunit a, chloroplastic from Barbarea verna (Land cress).